The sequence spans 131 residues: Profilin-1 (131 aa).

It belongs to the profilin family. Occurs in many kinds of cells as a complex with monomeric actin in a 1:1 ratio.

Its subcellular location is the cytoplasm. The protein resides in the cytoskeleton. Its function is as follows. Binds to actin and affects the structure of the cytoskeleton. At high concentrations, profilin prevents the polymerization of actin, whereas it enhances it at low concentrations. By binding to PIP2, it inhibits the formation of IP3 and DG. The polypeptide is Profilin-1 (Malus domestica (Apple)).